The chain runs to 484 residues: Glycogen synthase 2 (484 aa).

Lysine 15 contacts ADP-alpha-D-glucose.

Belongs to the glycosyltransferase 1 family. Bacterial/plant glycogen synthase subfamily.

It catalyses the reaction [(1-&gt;4)-alpha-D-glucosyl](n) + ADP-alpha-D-glucose = [(1-&gt;4)-alpha-D-glucosyl](n+1) + ADP + H(+). It functions in the pathway glycan biosynthesis; glycogen biosynthesis. In terms of biological role, synthesizes alpha-1,4-glucan chains using ADP-glucose. The protein is Glycogen synthase 2 of Geobacter metallireducens (strain ATCC 53774 / DSM 7210 / GS-15).